We begin with the raw amino-acid sequence, 335 residues long: 4-hydroxy-3-methylbut-2-enyl diphosphate reductase (335 aa).

Cys-21 is a [4Fe-4S] cluster binding site. (2E)-4-hydroxy-3-methylbut-2-enyl diphosphate contacts are provided by His-50 and His-86. Dimethylallyl diphosphate contacts are provided by His-50 and His-86. Residues His-50 and His-86 each contribute to the isopentenyl diphosphate site. Cys-108 contributes to the [4Fe-4S] cluster binding site. Residue His-136 coordinates (2E)-4-hydroxy-3-methylbut-2-enyl diphosphate. A dimethylallyl diphosphate-binding site is contributed by His-136. His-136 is a binding site for isopentenyl diphosphate. The Proton donor role is filled by Glu-138. Thr-177 provides a ligand contact to (2E)-4-hydroxy-3-methylbut-2-enyl diphosphate. Cys-207 serves as a coordination point for [4Fe-4S] cluster. (2E)-4-hydroxy-3-methylbut-2-enyl diphosphate-binding residues include Ser-235, Ser-236, Asn-237, and Ser-280. Ser-235, Ser-236, Asn-237, and Ser-280 together coordinate dimethylallyl diphosphate. Residues Ser-235, Ser-236, Asn-237, and Ser-280 each contribute to the isopentenyl diphosphate site.

This sequence belongs to the IspH family. [4Fe-4S] cluster is required as a cofactor.

It catalyses the reaction isopentenyl diphosphate + 2 oxidized [2Fe-2S]-[ferredoxin] + H2O = (2E)-4-hydroxy-3-methylbut-2-enyl diphosphate + 2 reduced [2Fe-2S]-[ferredoxin] + 2 H(+). The catalysed reaction is dimethylallyl diphosphate + 2 oxidized [2Fe-2S]-[ferredoxin] + H2O = (2E)-4-hydroxy-3-methylbut-2-enyl diphosphate + 2 reduced [2Fe-2S]-[ferredoxin] + 2 H(+). It participates in isoprenoid biosynthesis; dimethylallyl diphosphate biosynthesis; dimethylallyl diphosphate from (2E)-4-hydroxy-3-methylbutenyl diphosphate: step 1/1. It functions in the pathway isoprenoid biosynthesis; isopentenyl diphosphate biosynthesis via DXP pathway; isopentenyl diphosphate from 1-deoxy-D-xylulose 5-phosphate: step 6/6. Functionally, catalyzes the conversion of 1-hydroxy-2-methyl-2-(E)-butenyl 4-diphosphate (HMBPP) into a mixture of isopentenyl diphosphate (IPP) and dimethylallyl diphosphate (DMAPP). Acts in the terminal step of the DOXP/MEP pathway for isoprenoid precursor biosynthesis. In Rhizobium rhizogenes (strain K84 / ATCC BAA-868) (Agrobacterium radiobacter), this protein is 4-hydroxy-3-methylbut-2-enyl diphosphate reductase.